The sequence spans 391 residues: Secreted aspartic protease 1 (391 aa).

The signal sequence occupies residues 1–18 (MFLKNIFIALAIALLVDA). Positions 19–50 (SPAKRSPGFVTLDFDVIKTPVNATGQEGKVKR) are cleaved as a propeptide — activation peptide. N-linked (GlcNAc...) asparagine glycosylation is present at asparagine 40. In terms of domain architecture, Peptidase A1 spans 64-377 (YAADITIGSN…DLDDDKISLA (314 aa)). The active site involves aspartate 82. 82-84 (DTG) is a binding site for pepstatin A. A disulfide bridge links cysteine 97 with cysteine 109. A pepstatin A-binding site is contributed by 135-136 (GD). Residues aspartate 241 and aspartate 263 each contribute to the Zn(2+) site. Residue aspartate 267 is part of the active site. 267–271 (DSGTT) provides a ligand contact to pepstatin A. The cysteines at positions 305 and 343 are disulfide-linked.

Belongs to the peptidase A1 family. Monomer.

It is found in the secreted. It catalyses the reaction Preferential cleavage at the carboxyl of hydrophobic amino acids, but fails to cleave 15-Leu-|-Tyr-16, 16-Tyr-|-Leu-17 and 24-Phe-|-Phe-25 of insulin B chain. Activates trypsinogen, and degrades keratin.. Its activity is regulated as follows. Inhibited by pepstatin A analogs and squash aspartic peptidase inhibitor (SQAPI). Secreted aspartic peptidases (SAPs) are a group of ten acidic hydrolases considered as key virulence factors. These enzymes supply the fungus with nutrient amino acids as well as are able to degrade the selected host's proteins involved in the immune defense. Induces host inflammatory cytokine production in a proteolytic activity-independent way. Plays a role in tissue damage during superficial infection. Moreover, acts toward human hemoglobin though limited proteolysis to generate a variety of antimicrobial hemocidins, enabling to compete with the other microorganisms of the same physiological niche using the microbicidal peptides generated from the host protein. Functionally, plays a key role in defense against host by cleaving histatin-5 (Hst 5), a peptide from human saliva that carries out fungicidal activity. The cleavage rate decreases in an order of SAP2 &gt; SAP9 &gt; SAP3 &gt; SAP7 &gt; SAP4 &gt; SAP1 &gt; SAP8. The first cleavage occurs between residues 'Lys-17' and 'His-18' of Hst 5, giving DSHAKRHHGYKRKFHEK and HHSHRGY peptides. Further fragmentation by SAP1 results in AKRHHGYKRKFHEK and AKRHHGY products. The polypeptide is Secreted aspartic protease 1 (Candida albicans (strain SC5314 / ATCC MYA-2876) (Yeast)).